Reading from the N-terminus, the 272-residue chain is Dermonecrotic toxin LvSicTox-alphaIC1biv (272 aa).

Histidine 5 is an active-site residue. Mg(2+) contacts are provided by glutamate 25 and aspartate 27. The Nucleophile role is filled by histidine 41. Intrachain disulfides connect cysteine 45-cysteine 51 and cysteine 47-cysteine 189. Aspartate 84 contacts Mg(2+).

It belongs to the arthropod phospholipase D family. Class II subfamily. Mg(2+) serves as cofactor. Expressed by the venom gland.

It is found in the secreted. The catalysed reaction is an N-(acyl)-sphingosylphosphocholine = an N-(acyl)-sphingosyl-1,3-cyclic phosphate + choline. The enzyme catalyses an N-(acyl)-sphingosylphosphoethanolamine = an N-(acyl)-sphingosyl-1,3-cyclic phosphate + ethanolamine. It catalyses the reaction a 1-acyl-sn-glycero-3-phosphocholine = a 1-acyl-sn-glycero-2,3-cyclic phosphate + choline. It carries out the reaction a 1-acyl-sn-glycero-3-phosphoethanolamine = a 1-acyl-sn-glycero-2,3-cyclic phosphate + ethanolamine. In terms of biological role, dermonecrotic toxins cleave the phosphodiester linkage between the phosphate and headgroup of certain phospholipids (sphingolipid and lysolipid substrates), forming an alcohol (often choline) and a cyclic phosphate. This toxin acts on sphingomyelin (SM). It may also act on ceramide phosphoethanolamine (CPE), lysophosphatidylcholine (LPC) and lysophosphatidylethanolamine (LPE), but not on lysophosphatidylserine (LPS), and lysophosphatidylglycerol (LPG). It acts by transphosphatidylation, releasing exclusively cyclic phosphate products as second products. Induces dermonecrosis, hemolysis, increased vascular permeability, edema, inflammatory response, and platelet aggregation. This is Dermonecrotic toxin LvSicTox-alphaIC1biv from Loxosceles variegata (Recluse spider).